A 634-amino-acid chain; its full sequence is DNA-directed RNA polymerase subunit gamma (634 aa).

Zn(2+)-binding residues include C74, C76, C89, and C92. D471, D473, and D475 together coordinate Mg(2+).

This sequence belongs to the RNA polymerase beta' chain family. RpoC1 subfamily. In cyanobacteria the RNAP catalytic core is composed of 2 alpha, 1 beta, 1 beta', 1 gamma and 1 omega subunit. When a sigma factor is associated with the core the holoenzyme is formed, which can initiate transcription. It depends on Mg(2+) as a cofactor. Requires Zn(2+) as cofactor.

It catalyses the reaction RNA(n) + a ribonucleoside 5'-triphosphate = RNA(n+1) + diphosphate. Its function is as follows. DNA-dependent RNA polymerase catalyzes the transcription of DNA into RNA using the four ribonucleoside triphosphates as substrates. The sequence is that of DNA-directed RNA polymerase subunit gamma from Prochlorococcus marinus subsp. pastoris (strain CCMP1986 / NIES-2087 / MED4).